The primary structure comprises 234 residues: Sugar fermentation stimulation protein A (234 aa).

Residues 201 to 220 constitute a DNA-binding region (H-T-H motif); sequence LLSEAQQRGVEILAYKAELS.

It belongs to the SfsA family.

Its function is as follows. Binds to DNA non-specifically. Could be a regulatory factor involved in maltose metabolism. In Escherichia coli O127:H6 (strain E2348/69 / EPEC), this protein is Sugar fermentation stimulation protein A.